A 127-amino-acid polypeptide reads, in one-letter code: Aspartate 1-decarboxylase (127 aa).

Catalysis depends on Ser-25, which acts as the Schiff-base intermediate with substrate; via pyruvic acid. Ser-25 carries the pyruvic acid (Ser) modification. A substrate-binding site is contributed by Thr-57. Catalysis depends on Tyr-58, which acts as the Proton donor. Residue 73 to 75 (GAA) participates in substrate binding.

Belongs to the PanD family. As to quaternary structure, heterooctamer of four alpha and four beta subunits. Pyruvate is required as a cofactor. Post-translationally, is synthesized initially as an inactive proenzyme, which is activated by self-cleavage at a specific serine bond to produce a beta-subunit with a hydroxyl group at its C-terminus and an alpha-subunit with a pyruvoyl group at its N-terminus.

It localises to the cytoplasm. The catalysed reaction is L-aspartate + H(+) = beta-alanine + CO2. It functions in the pathway cofactor biosynthesis; (R)-pantothenate biosynthesis; beta-alanine from L-aspartate: step 1/1. Its function is as follows. Catalyzes the pyruvoyl-dependent decarboxylation of aspartate to produce beta-alanine. In Listeria welshimeri serovar 6b (strain ATCC 35897 / DSM 20650 / CCUG 15529 / CIP 8149 / NCTC 11857 / SLCC 5334 / V8), this protein is Aspartate 1-decarboxylase.